The primary structure comprises 133 residues: ATP synthase epsilon chain (133 aa).

It belongs to the ATPase epsilon chain family. F-type ATPases have 2 components, CF(1) - the catalytic core - and CF(0) - the membrane proton channel. CF(1) has five subunits: alpha(3), beta(3), gamma(1), delta(1), epsilon(1). CF(0) has three main subunits: a, b and c.

Its subcellular location is the cell membrane. In terms of biological role, produces ATP from ADP in the presence of a proton gradient across the membrane. The chain is ATP synthase epsilon chain from Bacillus cytotoxicus (strain DSM 22905 / CIP 110041 / 391-98 / NVH 391-98).